A 445-amino-acid polypeptide reads, in one-letter code: KIN17-like protein (445 aa).

Residues 26–50 form a C2H2-type zinc finger; that stretch reads WYCQLCEKQCRDENGFKCHISSESH. 2 stretches are compositionally biased toward low complexity: residues 215-229 and 239-253; these read NTTT…TTTN and NDNN…DQTN. The tract at residues 215–256 is disordered; the sequence is NTTTTTTNTTTTTTNKNIFDKLKTNDNNSSNNNYNDQTNPKP.

Belongs to the KIN17 family.

The sequence is that of KIN17-like protein from Dictyostelium discoideum (Social amoeba).